The primary structure comprises 86 residues: Large ribosomal subunit protein bL27c (86 aa).

Residues 1-27 (MAHKKGSGSTRNGRDSNSKRLGVKKYG) are disordered.

It belongs to the bacterial ribosomal protein bL27 family.

It localises to the plastid. Its subcellular location is the chloroplast. This chain is Large ribosomal subunit protein bL27c (rpl27), found in Porphyra purpurea (Red seaweed).